We begin with the raw amino-acid sequence, 545 residues long: CTP synthase (545 aa).

Positions 1–266 are amidoligase domain; sequence MTTNYIFVTG…DDYICKRFSL (266 aa). Position 14 (serine 14) interacts with CTP. Residue serine 14 coordinates UTP. ATP-binding positions include 15–20 and aspartate 72; that span reads SLGKGI. 2 residues coordinate Mg(2+): aspartate 72 and glutamate 140. Residues 147–149, 187–192, and lysine 223 contribute to the CTP site; these read DIE and KTKPTQ. UTP-binding positions include 187-192 and lysine 223; that span reads KTKPTQ. 239-241 contacts ATP; the sequence is KDV. A Glutamine amidotransferase type-1 domain is found at 291-542; that stretch reads TIGMVGKYIE…VKAASEYQKR (252 aa). L-glutamine is bound at residue glycine 352. The active-site Nucleophile; for glutamine hydrolysis is cysteine 379. L-glutamine-binding positions include 380 to 383, glutamate 403, and arginine 470; that span reads LGMQ. Residues histidine 515 and glutamate 517 contribute to the active site.

It belongs to the CTP synthase family. Homotetramer.

It carries out the reaction UTP + L-glutamine + ATP + H2O = CTP + L-glutamate + ADP + phosphate + 2 H(+). The catalysed reaction is L-glutamine + H2O = L-glutamate + NH4(+). The enzyme catalyses UTP + NH4(+) + ATP = CTP + ADP + phosphate + 2 H(+). It participates in pyrimidine metabolism; CTP biosynthesis via de novo pathway; CTP from UDP: step 2/2. Its activity is regulated as follows. Allosterically activated by GTP, when glutamine is the substrate; GTP has no effect on the reaction when ammonia is the substrate. The allosteric effector GTP functions by stabilizing the protein conformation that binds the tetrahedral intermediate(s) formed during glutamine hydrolysis. Inhibited by the product CTP, via allosteric rather than competitive inhibition. Its function is as follows. Catalyzes the ATP-dependent amination of UTP to CTP with either L-glutamine or ammonia as the source of nitrogen. Regulates intracellular CTP levels through interactions with the four ribonucleotide triphosphates. This is CTP synthase from Cronobacter sakazakii (strain ATCC BAA-894) (Enterobacter sakazakii).